A 468-amino-acid polypeptide reads, in one-letter code: MGRRWGFLIGFLVAVGLLGLGHGEQQPSETAAQRCFCQVSGYLDDCTCDVETIDKFNNYRLFPRLQKLLESDYFRYYKVNLKRPCPFWNDINQCGRRDCAVKPCHSDEVPDGIKSASYKYSEEANNLIEECEQAERLGAVDESLSEETQKAVLQWTKHDDSSDNFCEVDDIQSPDAEYVDLLLNPERYTGYKGPDAWKIWNVIYEENCFKPQTIKRPLNPLASGQGKSEENTFYSWLEGLCVEKRAFYRLISGLHASINVHLSARYLLQDTWLEKKWGHNITEFQQRFDGILTEGEGPRRLKNLYFLYLIELRALSKVVPFFERPDFQLFTGNKDQDAENKMLLLEILHEIKSFPLHFDENSFFAGNKKEANKLKEDFRLHFRNISRIMDCVGCLKCRLWGKLQTQGLGTALKILFSEKLIANMPESGPSYEFHLTRQEIVSLFNAFGRISTSVKELENFRNLLQNIH.

The first 23 residues, 1 to 23 (MGRRWGFLIGFLVAVGLLGLGHG), serve as a signal peptide directing secretion. 8 cysteine pairs are disulfide-bonded: Cys35–Cys48, Cys37–Cys46, Cys85–Cys391, Cys94–Cys99, Cys94–Cys131, Cys99–Cys104, Cys208–Cys241, and Cys394–Cys397. Phosphoserine occurs at positions 106, 143, and 145. Arg187, Thr189, and Trp200 together coordinate FAD. Residues Ser252 and His255 each coordinate FAD. Asn280 carries an N-linked (GlcNAc...) asparagine glycan. Arg287 and Arg300 together coordinate FAD. N-linked (GlcNAc...) asparagine glycosylation is present at Asn384.

Belongs to the EROs family. As to quaternary structure, predominantly monomer. May function both as a monomer and a homodimer. Interacts with PDILT. Interacts with ERP44; the interaction results in retention of ERO1A in the endoplasmic reticulum. FAD is required as a cofactor. Post-translationally, the Cys-94/Cys-99 and Cys-394/Cys-397 disulfide bonds constitute the redox-active center. The Cys-94/Cys-99 disulfide bond may accept electron from P4HB and funnel them to the active site disulfide Cys-394/Cys-397. The regulatory Cys-99/Cys-104 disulfide bond stabilizes the other regulatory bond Cys-94/Cys-131. In terms of processing, phosphorylated on Ser-145 by FAM20C in the Golgi which increases its enzymatic activity. Phosphorylation is induced by lactation. It is also induced by hypoxia and reductive stress.

It localises to the endoplasmic reticulum membrane. The protein resides in the golgi apparatus lumen. The protein localises to the secreted. Its subcellular location is the cell projection. It is found in the dendrite. Its activity is regulated as follows. Enzyme activity is tightly regulated to prevent the accumulation of reactive oxygen species in the endoplasmic reticulum. Reversibly down-regulated by the formation of disulfide bonds between the active site Cys-94 and Cys-131, and between Cys-99 and Cys-104. Glutathione may be required to regulate its activity in the endoplasmic reticulum. Functionally, oxidoreductase involved in disulfide bond formation in the endoplasmic reticulum. Efficiently reoxidizes P4HB/PDI, the enzyme catalyzing protein disulfide formation, in order to allow P4HB to sustain additional rounds of disulfide formation. Following P4HB reoxidation, passes its electrons to molecular oxygen via FAD, leading to the production of reactive oxygen species (ROS) in the cell. Required for the proper folding of immunoglobulins. Plays an important role in ER stress-induced, CHOP-dependent apoptosis by activating the inositol 1,4,5-trisphosphate receptor IP3R1. The polypeptide is ERO1-like protein alpha (Bos taurus (Bovine)).